The sequence spans 513 residues: MAEASVDIGTQPVTVKKKKSLSIEEKIDIINAVESGKKKAEIAAEYGIKKNSLSSIMKNKDKVLEAFESLRFDPKRKRLRTAFYTDLEEALMRWYRIAQCLNVPVNGPMLRLKANDFAQKLGHNDFKCSNGWLDRFKSRYGLVFRAQPVEATGISIDPSTVWYQNVLPYYLNDYHPKNVFNVKETGLLYRMLPTNTFAFKGETCSVGKLCKDRITLALGTNMDGSEKLPLLIIGKNRAPRCFKGIKSLPVYYEANRTAWMTAAIFEQWMQKLDEKFQAQKRRVVIFVDSCPAHPEVKNLKSIELAFFPSCLSSGFAAMNQGVIKSLKIKYRHCLIKKFLSSVESSKEFTFSLLDAVDTLHLCWRAVTPETIVKSYEEAGFRSPKGENDTANADAAVALDLTAHAVGAGVEFLEGLSIEEYAALDEDLETCEATQKDDAEWAGESKQDETGLYTSDEEEEDSGALEVDLPSPSKKDALSAVGTLKRFLRSHDLNDELHGSLADLENFINALSPK.

Residues 12–63 enclose the HTH psq-type domain; that stretch reads PVTVKKKKSLSIEEKIDIINAVESGKKKAEIAAEYGIKKNSLSSIMKNKDKV. DNA-binding regions (H-T-H motif) lie at residues 39 to 59 and 108 to 139; these read KAEI…IMKN and PMLR…FKSR. An HTH CENPB-type domain is found at 75–146; that stretch reads KRKRLRTAFY…KSRYGLVFRA (72 aa). The DDE-1 domain occupies 174–375; that stretch reads YHPKNVFNVK…VTPETIVKSY (202 aa). The span at 433 to 448 shows a compositional bias: basic and acidic residues; it reads TQKDDAEWAGESKQDE. Residues 433–473 form a disordered region; that stretch reads TQKDDAEWAGESKQDETGLYTSDEEEEDSGALEVDLPSPSK.

It belongs to the tigger transposable element derived protein family.

The protein localises to the nucleus. The protein is Tigger transposable element-derived protein 4 (Tigd4) of Mus musculus (Mouse).